Here is a 203-residue protein sequence, read N- to C-terminus: Holliday junction branch migration complex subunit RuvA (203 aa).

A domain I region spans residues 1–64 (MIGRLRGIIL…EDAQLLYGFN (64 aa)). The domain II stretch occupies residues 65–142 (NKQERTLFKE…KGLHGDLFTP (78 aa)). The tract at residues 143 to 154 (AADLVLTSPAGP) is flexible linker. The domain III stretch occupies residues 155–203 (TADDAEQEAVAALVALGYKPQEASRMVSKIARPDANSETLIREALRAAL).

It belongs to the RuvA family. Homotetramer. Forms an RuvA(8)-RuvB(12)-Holliday junction (HJ) complex. HJ DNA is sandwiched between 2 RuvA tetramers; dsDNA enters through RuvA and exits via RuvB. An RuvB hexamer assembles on each DNA strand where it exits the tetramer. Each RuvB hexamer is contacted by two RuvA subunits (via domain III) on 2 adjacent RuvB subunits; this complex drives branch migration. In the full resolvosome a probable DNA-RuvA(4)-RuvB(12)-RuvC(2) complex forms which resolves the HJ.

The protein resides in the cytoplasm. The RuvA-RuvB-RuvC complex processes Holliday junction (HJ) DNA during genetic recombination and DNA repair, while the RuvA-RuvB complex plays an important role in the rescue of blocked DNA replication forks via replication fork reversal (RFR). RuvA specifically binds to HJ cruciform DNA, conferring on it an open structure. The RuvB hexamer acts as an ATP-dependent pump, pulling dsDNA into and through the RuvAB complex. HJ branch migration allows RuvC to scan DNA until it finds its consensus sequence, where it cleaves and resolves the cruciform DNA. The polypeptide is Holliday junction branch migration complex subunit RuvA (Klebsiella pneumoniae (strain 342)).